Reading from the N-terminus, the 275-residue chain is tRNA pseudouridine synthase A (275 aa).

The Nucleophile role is filled by aspartate 60. Position 119 (tyrosine 119) interacts with substrate.

Belongs to the tRNA pseudouridine synthase TruA family. As to quaternary structure, homodimer.

The enzyme catalyses uridine(38/39/40) in tRNA = pseudouridine(38/39/40) in tRNA. Formation of pseudouridine at positions 38, 39 and 40 in the anticodon stem and loop of transfer RNAs. In Synechocystis sp. (strain ATCC 27184 / PCC 6803 / Kazusa), this protein is tRNA pseudouridine synthase A.